Here is a 574-residue protein sequence, read N- to C-terminus: MYND-type zinc finger protein C31F10.10c (574 aa).

Disordered stretches follow at residues 207–253 (DSGD…QDPR) and 283–307 (MTTP…DEID). 2 stretches are compositionally biased toward polar residues: residues 243–253 (IYSNDSFQDPR) and 283–301 (MTTP…ASET). Residues 482–523 (NLLCNKWEEHSRQFAKCRRCRRTKYCSKECQHQAWPGHSRWC) form an MYND-type; degenerate zinc finger. 4 residues coordinate Zn(2+): Cys-498, Cys-501, His-519, and Cys-523. The disordered stretch occupies residues 534-574 (KRESSKINSVTESESTASPAASVIPVGTESVTSSTQSDSRL). Residues 542–556 (SVTESESTASPAASV) are compositionally biased toward low complexity. The segment covering 562-574 (ESVTSSTQSDSRL) has biased composition (polar residues).

The protein belongs to the MUB1/samB family.

Its subcellular location is the nucleus. It is found in the cytoplasm. It localises to the cytoskeleton. The protein resides in the microtubule organizing center. The protein localises to the spindle pole body. This is MYND-type zinc finger protein C31F10.10c from Schizosaccharomyces pombe (strain 972 / ATCC 24843) (Fission yeast).